The sequence spans 462 residues: UDP-N-acetylmuramoylalanine--D-glutamate ligase (462 aa).

117-123 contributes to the ATP binding site; it reads GTNGKTT.

Belongs to the MurCDEF family.

It is found in the cytoplasm. It catalyses the reaction UDP-N-acetyl-alpha-D-muramoyl-L-alanine + D-glutamate + ATP = UDP-N-acetyl-alpha-D-muramoyl-L-alanyl-D-glutamate + ADP + phosphate + H(+). Its pathway is cell wall biogenesis; peptidoglycan biosynthesis. In terms of biological role, cell wall formation. Catalyzes the addition of glutamate to the nucleotide precursor UDP-N-acetylmuramoyl-L-alanine (UMA). The polypeptide is UDP-N-acetylmuramoylalanine--D-glutamate ligase (Synechococcus sp. (strain CC9902)).